The chain runs to 557 residues: Formate--tetrahydrofolate ligase (557 aa).

67-74 lines the ATP pocket; the sequence is TPAGEGKT.

The protein belongs to the formate--tetrahydrofolate ligase family.

The catalysed reaction is (6S)-5,6,7,8-tetrahydrofolate + formate + ATP = (6R)-10-formyltetrahydrofolate + ADP + phosphate. It participates in one-carbon metabolism; tetrahydrofolate interconversion. The polypeptide is Formate--tetrahydrofolate ligase (Cereibacter sphaeroides (strain ATCC 17029 / ATH 2.4.9) (Rhodobacter sphaeroides)).